Reading from the N-terminus, the 335-residue chain is 4-hydroxy-3-methylbut-2-enyl diphosphate reductase (335 aa).

Cysteine 21 contacts [4Fe-4S] cluster. The (2E)-4-hydroxy-3-methylbut-2-enyl diphosphate site is built by histidine 50 and histidine 86. Positions 50 and 86 each coordinate dimethylallyl diphosphate. Isopentenyl diphosphate is bound by residues histidine 50 and histidine 86. [4Fe-4S] cluster is bound at residue cysteine 108. Histidine 136 serves as a coordination point for (2E)-4-hydroxy-3-methylbut-2-enyl diphosphate. Histidine 136 is a binding site for dimethylallyl diphosphate. Isopentenyl diphosphate is bound at residue histidine 136. Residue glutamate 138 is the Proton donor of the active site. Threonine 177 is a (2E)-4-hydroxy-3-methylbut-2-enyl diphosphate binding site. Cysteine 207 provides a ligand contact to [4Fe-4S] cluster. Residues serine 235, serine 236, asparagine 237, and serine 280 each coordinate (2E)-4-hydroxy-3-methylbut-2-enyl diphosphate. 4 residues coordinate dimethylallyl diphosphate: serine 235, serine 236, asparagine 237, and serine 280. The isopentenyl diphosphate site is built by serine 235, serine 236, asparagine 237, and serine 280.

Belongs to the IspH family. It depends on [4Fe-4S] cluster as a cofactor.

It catalyses the reaction isopentenyl diphosphate + 2 oxidized [2Fe-2S]-[ferredoxin] + H2O = (2E)-4-hydroxy-3-methylbut-2-enyl diphosphate + 2 reduced [2Fe-2S]-[ferredoxin] + 2 H(+). The catalysed reaction is dimethylallyl diphosphate + 2 oxidized [2Fe-2S]-[ferredoxin] + H2O = (2E)-4-hydroxy-3-methylbut-2-enyl diphosphate + 2 reduced [2Fe-2S]-[ferredoxin] + 2 H(+). It participates in isoprenoid biosynthesis; dimethylallyl diphosphate biosynthesis; dimethylallyl diphosphate from (2E)-4-hydroxy-3-methylbutenyl diphosphate: step 1/1. It functions in the pathway isoprenoid biosynthesis; isopentenyl diphosphate biosynthesis via DXP pathway; isopentenyl diphosphate from 1-deoxy-D-xylulose 5-phosphate: step 6/6. Functionally, catalyzes the conversion of 1-hydroxy-2-methyl-2-(E)-butenyl 4-diphosphate (HMBPP) into a mixture of isopentenyl diphosphate (IPP) and dimethylallyl diphosphate (DMAPP). Acts in the terminal step of the DOXP/MEP pathway for isoprenoid precursor biosynthesis. The chain is 4-hydroxy-3-methylbut-2-enyl diphosphate reductase from Rhizobium rhizogenes (strain K84 / ATCC BAA-868) (Agrobacterium radiobacter).